The chain runs to 387 residues: tRNA-specific 2-thiouridylase MnmA (387 aa).

ATP is bound by residues 6-13 and Leu32; that span reads AMSGGVDS. The Nucleophile role is filled by Cys101. Cysteines 101 and 199 form a disulfide. Gly125 provides a ligand contact to ATP. Positions 148–150 are interaction with tRNA; that stretch reads KDQ. Residue Cys199 is the Cysteine persulfide intermediate of the active site.

This sequence belongs to the MnmA/TRMU family.

The protein resides in the cytoplasm. It catalyses the reaction S-sulfanyl-L-cysteinyl-[protein] + uridine(34) in tRNA + AH2 + ATP = 2-thiouridine(34) in tRNA + L-cysteinyl-[protein] + A + AMP + diphosphate + H(+). Catalyzes the 2-thiolation of uridine at the wobble position (U34) of tRNA, leading to the formation of s(2)U34. The chain is tRNA-specific 2-thiouridylase MnmA from Clavibacter michiganensis subsp. michiganensis (strain NCPPB 382).